Reading from the N-terminus, the 57-residue chain is Large ribosomal subunit protein bL32B (57 aa).

This sequence belongs to the bacterial ribosomal protein bL32 family.

The chain is Large ribosomal subunit protein bL32B from Listeria welshimeri serovar 6b (strain ATCC 35897 / DSM 20650 / CCUG 15529 / CIP 8149 / NCTC 11857 / SLCC 5334 / V8).